We begin with the raw amino-acid sequence, 453 residues long: UDP-N-acetylmuramoylalanine--D-glutamate ligase (453 aa).

Gly119–Thr125 is an ATP binding site.

This sequence belongs to the MurCDEF family.

It localises to the cytoplasm. It catalyses the reaction UDP-N-acetyl-alpha-D-muramoyl-L-alanine + D-glutamate + ATP = UDP-N-acetyl-alpha-D-muramoyl-L-alanyl-D-glutamate + ADP + phosphate + H(+). The protein operates within cell wall biogenesis; peptidoglycan biosynthesis. Its function is as follows. Cell wall formation. Catalyzes the addition of glutamate to the nucleotide precursor UDP-N-acetylmuramoyl-L-alanine (UMA). The chain is UDP-N-acetylmuramoylalanine--D-glutamate ligase from Syntrophus aciditrophicus (strain SB).